A 206-amino-acid polypeptide reads, in one-letter code: Small ribosomal subunit protein uS4 (206 aa).

The 61-residue stretch at 96 to 156 (TRLDNVVYRM…EKSRTQARIK (61 aa)) folds into the S4 RNA-binding domain.

The protein belongs to the universal ribosomal protein uS4 family. In terms of assembly, part of the 30S ribosomal subunit. Contacts protein S5. The interaction surface between S4 and S5 is involved in control of translational fidelity.

Functionally, one of the primary rRNA binding proteins, it binds directly to 16S rRNA where it nucleates assembly of the body of the 30S subunit. With S5 and S12 plays an important role in translational accuracy. The polypeptide is Small ribosomal subunit protein uS4 (Shewanella baltica (strain OS223)).